The chain runs to 184 residues: UPF0149 protein PA14_69010 (184 aa).

This sequence belongs to the UPF0149 family.

The polypeptide is UPF0149 protein PA14_69010 (Pseudomonas aeruginosa (strain UCBPP-PA14)).